The sequence spans 220 residues: Fructose-6-phosphate aldolase (220 aa).

Lys85 (schiff-base intermediate with substrate) is an active-site residue.

The protein belongs to the transaldolase family. Type 3A subfamily. In terms of assembly, homodecamer.

It localises to the cytoplasm. It carries out the reaction beta-D-fructose 6-phosphate = dihydroxyacetone + D-glyceraldehyde 3-phosphate. In terms of biological role, catalyzes the reversible formation of fructose 6-phosphate from dihydroxyacetone and D-glyceraldehyde 3-phosphate via an aldolization reaction. The polypeptide is Fructose-6-phosphate aldolase (Salmonella gallinarum (strain 287/91 / NCTC 13346)).